We begin with the raw amino-acid sequence, 642 residues long: Threonine--tRNA ligase (642 aa).

The TGS domain maps to 1–61 (MPVIRFYDGS…REDAFIEFVD (61 aa)). The tract at residues 243–534 (DHRKIGKFLQ…LIEECSGNLP (292 aa)) is catalytic. The Zn(2+) site is built by Cys334, His385, and His511.

It belongs to the class-II aminoacyl-tRNA synthetase family. In terms of assembly, homodimer. It depends on Zn(2+) as a cofactor.

It is found in the cytoplasm. It carries out the reaction tRNA(Thr) + L-threonine + ATP = L-threonyl-tRNA(Thr) + AMP + diphosphate + H(+). Functionally, catalyzes the attachment of threonine to tRNA(Thr) in a two-step reaction: L-threonine is first activated by ATP to form Thr-AMP and then transferred to the acceptor end of tRNA(Thr). Also edits incorrectly charged L-seryl-tRNA(Thr). In Buchnera aphidicola subsp. Acyrthosiphon pisum (strain APS) (Acyrthosiphon pisum symbiotic bacterium), this protein is Threonine--tRNA ligase.